We begin with the raw amino-acid sequence, 237 residues long: Purine nucleoside phosphorylase DeoD-type (237 aa).

Histidine 4 is an a purine D-ribonucleoside binding site. Phosphate-binding positions include glycine 20, arginine 24, arginine 43, and 87–90 (RVGS). A purine D-ribonucleoside is bound by residues 179–181 (EME) and 203–204 (SD). The active-site Proton donor is the aspartate 204.

Belongs to the PNP/UDP phosphorylase family. As to quaternary structure, homohexamer; trimer of homodimers.

The catalysed reaction is a purine D-ribonucleoside + phosphate = a purine nucleobase + alpha-D-ribose 1-phosphate. It catalyses the reaction a purine 2'-deoxy-D-ribonucleoside + phosphate = a purine nucleobase + 2-deoxy-alpha-D-ribose 1-phosphate. Functionally, catalyzes the reversible phosphorolytic breakdown of the N-glycosidic bond in the beta-(deoxy)ribonucleoside molecules, with the formation of the corresponding free purine bases and pentose-1-phosphate. The chain is Purine nucleoside phosphorylase DeoD-type from Dichelobacter nodosus (strain VCS1703A).